We begin with the raw amino-acid sequence, 521 residues long: Glutamate--cysteine ligase (521 aa).

This sequence belongs to the glutamate--cysteine ligase type 1 family. Type 1 subfamily.

It carries out the reaction L-cysteine + L-glutamate + ATP = gamma-L-glutamyl-L-cysteine + ADP + phosphate + H(+). It functions in the pathway sulfur metabolism; glutathione biosynthesis; glutathione from L-cysteine and L-glutamate: step 1/2. The polypeptide is Glutamate--cysteine ligase (Aliivibrio fischeri (strain MJ11) (Vibrio fischeri)).